The chain runs to 365 residues: MEVKDIVFMNKGDGENSYVKSAGLTLKVIAKTQPMVQKAVQSLFKGTHSAPLQVVNVADLGCALAPQPLESMSIVIESIVEKCGELGCEMPEIQFHFNDLAGNDFNTLFKGLSVVQEKYKNVSWFAMGAPGSFHGRLFPRNSMHLVHSCYSVHWLSKAPKITSEEGLPLNKGKIYMSKTSXXXXXXXXXXXFEEDFSSVLRFRSPELAPDGRMVLILNGRQSADPTEKDICYLWDLLAEALSYLVSEGLIDEEKLDSFNVPYYNPSQEEVERVIDKEGSFTTEFSDTVVLEIGGKNAWSDPGLRIKGYRCFSEPVLSHQFGEEVMDKLFDKAEEILAEDYKQGKEATKNISIVVVLKKKTNQTWT.

Residue Y18 participates in S-adenosyl-L-homocysteine binding. Residue T25 participates in theobromine binding. 6 residues coordinate S-adenosyl-L-homocysteine: C62, Q67, D99, L100, S132, and F133. Theobromine-binding residues include Y150, H153, and W154. Residues N170, D256, F258, and N259 each contribute to the Mg(2+) site. F311 provides a ligand contact to theobromine.

The protein belongs to the methyltransferase superfamily. Type-7 methyltransferase family. Requires Mg(2+) as cofactor.

It catalyses the reaction 7-methylxanthine + S-adenosyl-L-methionine = theobromine + S-adenosyl-L-homocysteine + H(+). Its pathway is alkaloid biosynthesis. Its function is as follows. Involved in the biosynthesis of theobromine. This chain is Probable 7-methylxanthine methyltransferase 4, found in Theobroma cacao (Cacao).